The primary structure comprises 475 residues: Na(+)/H(+) antiporter NhaA 2 (475 aa).

Helical transmembrane passes span 44-64 (AQATASVFLLVATITALWWAN), 92-112 (LKHIINDGLMVIFFFFIGLEI), 130-150 (LILCALGGMICPAVIYSLFNW), 156-176 (IGWGIPMATDTAFALGALTLV), 186-206 (AFLVGLAIVDDVGAIVVIALF), 211-231 (ISVIFLSISFSLIAFLAIANY), 232-252 (AGVLRPIFYILIGIAAWWTML), 255-275 (GVHPTFAGVAIALTVPARPML), 331-351 (ALDLPVSLFVLPLFALVNAGV), 368-388 (LGIVIGLVIGKFVGISGACWL), 406-426 (VIGMSLIAGIGFTMSTFIATL), and 442-462 (ILFASLLSAILGLLYLRIIAA).

Belongs to the NhaA Na(+)/H(+) (TC 2.A.33) antiporter family.

It localises to the cell inner membrane. The enzyme catalyses Na(+)(in) + 2 H(+)(out) = Na(+)(out) + 2 H(+)(in). In terms of biological role, na(+)/H(+) antiporter that extrudes sodium in exchange for external protons. This chain is Na(+)/H(+) antiporter NhaA 2, found in Psychromonas ingrahamii (strain DSM 17664 / CCUG 51855 / 37).